The sequence spans 432 residues: Glutamyl-tRNA reductase (432 aa).

Substrate is bound by residues 49 to 52 (TCNR), Ser-109, 114 to 116 (EGQ), and Gln-120. Cys-50 (nucleophile) is an active-site residue. Residue 189–194 (GAGKMS) participates in NADP(+) binding.

Belongs to the glutamyl-tRNA reductase family. In terms of assembly, homodimer.

Its subcellular location is the plastid. It localises to the cyanelle. The enzyme catalyses (S)-4-amino-5-oxopentanoate + tRNA(Glu) + NADP(+) = L-glutamyl-tRNA(Glu) + NADPH + H(+). Its pathway is porphyrin-containing compound metabolism; protoporphyrin-IX biosynthesis; 5-aminolevulinate from L-glutamyl-tRNA(Glu): step 1/2. It participates in porphyrin-containing compound metabolism; chlorophyll biosynthesis. In terms of biological role, catalyzes the NADPH-dependent reduction of glutamyl-tRNA(Glu) to glutamate 1-semialdehyde (GSA). This chain is Glutamyl-tRNA reductase, found in Cyanophora paradoxa.